Reading from the N-terminus, the 426-residue chain is Limonoid 21-O-acetyltransferse (426 aa).

Catalysis depends on proton acceptor residues His152 and Asp365.

It belongs to the plant acyltransferase family. In terms of assembly, monomer. In terms of tissue distribution, expressed in maturing fruits and in juice vesicles.

It carries out the reaction isomeliandiol + acetyl-CoA = 21-O-acetyl-isomeliandiol + CoA. It participates in secondary metabolite biosynthesis; terpenoid biosynthesis. Acetyltransferase involved in the biosynthesis of limonoids triterpene natural products such as limonin, a compound with insecticidal activity responsible for the bitter taste in citrus. Catalyzes the formation of 21-O-acetyl-isomeliandiol from isomeliandiol. The sequence is that of Limonoid 21-O-acetyltransferse from Citrus sinensis (Sweet orange).